The primary structure comprises 929 residues: Bifunctional glutamine synthetase adenylyltransferase/adenylyl-removing enzyme (929 aa).

Residues 1–422 form an adenylyl removase region; it reads MTTPISTSRA…TRHFEQIFAV (422 aa). The tract at residues 429 to 929 is adenylyl transferase; sequence LGTFARIRPE…FQLWEDVFGT (501 aa).

It belongs to the GlnE family. The cofactor is Mg(2+).

It catalyses the reaction [glutamine synthetase]-O(4)-(5'-adenylyl)-L-tyrosine + phosphate = [glutamine synthetase]-L-tyrosine + ADP. It carries out the reaction [glutamine synthetase]-L-tyrosine + ATP = [glutamine synthetase]-O(4)-(5'-adenylyl)-L-tyrosine + diphosphate. Involved in the regulation of glutamine synthetase GlnA, a key enzyme in the process to assimilate ammonia. When cellular nitrogen levels are high, the C-terminal adenylyl transferase (AT) inactivates GlnA by covalent transfer of an adenylyl group from ATP to specific tyrosine residue of GlnA, thus reducing its activity. Conversely, when nitrogen levels are low, the N-terminal adenylyl removase (AR) activates GlnA by removing the adenylyl group by phosphorolysis, increasing its activity. The regulatory region of GlnE binds the signal transduction protein PII (GlnB) which indicates the nitrogen status of the cell. This Nitrosomonas eutropha (strain DSM 101675 / C91 / Nm57) protein is Bifunctional glutamine synthetase adenylyltransferase/adenylyl-removing enzyme.